A 104-amino-acid chain; its full sequence is Phosphoribosyl-ATP pyrophosphatase (104 aa).

This sequence belongs to the PRA-PH family.

The protein localises to the cytoplasm. It catalyses the reaction 1-(5-phospho-beta-D-ribosyl)-ATP + H2O = 1-(5-phospho-beta-D-ribosyl)-5'-AMP + diphosphate + H(+). Its pathway is amino-acid biosynthesis; L-histidine biosynthesis; L-histidine from 5-phospho-alpha-D-ribose 1-diphosphate: step 2/9. The chain is Phosphoribosyl-ATP pyrophosphatase from Erythrobacter litoralis (strain HTCC2594).